Consider the following 215-residue polypeptide: Cytochrome b6 (215 aa).

A helical membrane pass occupies residues 32–52 (IFHCLGGITLTCFLVQVATGF). Residue cysteine 35 participates in heme c binding. Residues histidine 86 and histidine 100 each contribute to the heme b site. The next 3 helical transmembrane spans lie at 90–110 (ASMMVLMMILHVFRVYLTGGF), 116–136 (LTWVTGVVLAVLTASFGVTGY), and 186–206 (LHTFVLPLLTAVFMLMHFPMI). Histidine 187 and histidine 202 together coordinate heme b.

Belongs to the cytochrome b family. PetB subfamily. The 4 large subunits of the cytochrome b6-f complex are cytochrome b6, subunit IV (17 kDa polypeptide, PetD), cytochrome f and the Rieske protein, while the 4 small subunits are PetG, PetL, PetM and PetN. The complex functions as a dimer. Requires heme b as cofactor. Heme c serves as cofactor.

It is found in the plastid. The protein localises to the chloroplast thylakoid membrane. In terms of biological role, component of the cytochrome b6-f complex, which mediates electron transfer between photosystem II (PSII) and photosystem I (PSI), cyclic electron flow around PSI, and state transitions. The chain is Cytochrome b6 from Calycanthus floridus var. glaucus (Eastern sweetshrub).